Here is a 187-residue protein sequence, read N- to C-terminus: uncharacterized protein (187 aa).

The helical transmembrane segment at 3–23 (AIIIFLILFIVGVLIGVGVYY) threads the bilayer.

The protein resides in the membrane. This is an uncharacterized protein from Methanocaldococcus jannaschii (strain ATCC 43067 / DSM 2661 / JAL-1 / JCM 10045 / NBRC 100440) (Methanococcus jannaschii).